The primary structure comprises 123 residues: UPF0102 protein Mflv_4140 (123 aa).

The protein belongs to the UPF0102 family.

The chain is UPF0102 protein Mflv_4140 from Mycolicibacterium gilvum (strain PYR-GCK) (Mycobacterium gilvum (strain PYR-GCK)).